Consider the following 207-residue polypeptide: MATTLEVQKRETTQHSEVTRLRSEGKVPGIIYGYKSENVPVSVDSLELIKAVRDNGRNAVFSVTVDGKKLNVLLHEYQVDPLKDVLVHVDLLAVDMNEEVETDVRVVLVGDAPGVKAGGVLQQIIHDVKVSATPEKLPETIELDISSLEIGDVLTTNDLPENKDYVVQAEEEETVVTVSAPRAEEEPTTTEAPEPEAVHGKDEEPVE.

The segment at 171 to 207 is disordered; sequence EEETVVTVSAPRAEEEPTTTEAPEPEAVHGKDEEPVE. The segment covering 196–207 has biased composition (basic and acidic residues); it reads EAVHGKDEEPVE.

This sequence belongs to the bacterial ribosomal protein bL25 family. CTC subfamily. As to quaternary structure, part of the 50S ribosomal subunit; part of the 5S rRNA/L5/L18/L25 subcomplex. Contacts the 5S rRNA. Binds to the 5S rRNA independently of L5 and L18.

This is one of the proteins that binds to the 5S RNA in the ribosome where it forms part of the central protuberance. The polypeptide is Large ribosomal subunit protein bL25 (Listeria monocytogenes serotype 4b (strain F2365)).